Reading from the N-terminus, the 645-residue chain is Threonine--tRNA ligase (645 aa).

The TGS domain occupies methionine 1–threonine 63. Positions aspartate 242–proline 540 are catalytic. Positions 336, 387, and 517 each coordinate Zn(2+).

It belongs to the class-II aminoacyl-tRNA synthetase family. In terms of assembly, homodimer. Zn(2+) is required as a cofactor.

Its subcellular location is the cytoplasm. The enzyme catalyses tRNA(Thr) + L-threonine + ATP = L-threonyl-tRNA(Thr) + AMP + diphosphate + H(+). Its function is as follows. Catalyzes the attachment of threonine to tRNA(Thr) in a two-step reaction: L-threonine is first activated by ATP to form Thr-AMP and then transferred to the acceptor end of tRNA(Thr). Also edits incorrectly charged L-seryl-tRNA(Thr). The protein is Threonine--tRNA ligase of Staphylococcus aureus (strain Mu3 / ATCC 700698).